Reading from the N-terminus, the 151-residue chain is MKTDRHKKILEVIDRYEVGTQEELAKILNDEGYNVTQATVSRDIRELNLSKVSVDGKRTRYATLTKDKPVASDKFLTVLKEGFVSMDMAQNILVIKTAPGMAMAVCAAIDALEWNEIVGSIAGDDTIMCAVRTVNDTLLVMNKIKKLIKNN.

This sequence belongs to the ArgR family.

Its subcellular location is the cytoplasm. The protein operates within amino-acid biosynthesis; L-arginine biosynthesis [regulation]. Regulates arginine biosynthesis genes. This chain is Arginine repressor, found in Lachnospira eligens (strain ATCC 27750 / DSM 3376 / VPI C15-48 / C15-B4) (Eubacterium eligens).